A 198-amino-acid polypeptide reads, in one-letter code: Ribonuclease HII (198 aa).

The region spanning 10-198 is the RNase H type-2 domain; it reads HLVAGVDEVG…PVKRALGLVS (189 aa). The a divalent metal cation site is built by Asp-16, Glu-17, and Asp-108.

It belongs to the RNase HII family. It depends on Mn(2+) as a cofactor. Mg(2+) serves as cofactor.

The protein resides in the cytoplasm. It carries out the reaction Endonucleolytic cleavage to 5'-phosphomonoester.. Functionally, endonuclease that specifically degrades the RNA of RNA-DNA hybrids. This chain is Ribonuclease HII, found in Salmonella schwarzengrund (strain CVM19633).